Consider the following 249-residue polypeptide: Putative type I specificity subunit S.MpnORF615P (249 aa).

The protein belongs to the type-I restriction system S methylase family. In terms of assembly, the methyltransferase is composed of M and S polypeptides.

In terms of biological role, the specificity (S) subunit of a type I methyltransferase (MTase); this subunit dictates DNA sequence specificity. The single R subunit has multiple frameshifts and is probably not expressed. This Mycoplasma pneumoniae (strain ATCC 29342 / M129 / Subtype 1) (Mycoplasmoides pneumoniae) protein is Putative type I specificity subunit S.MpnORF615P.